The sequence spans 518 residues: Bifunctional methyltransferase (518 aa).

A hemK region spans residues 1 to 300 (MQYSIKQILS…SHNRVIEISP (300 aa)). The RF MTase stretch occupies residues 1 to 302 (MQYSIKQILS…NRVIEISPIN (302 aa)). S-adenosyl-L-methionine-binding positions include 140-144 (GTGSG), Asp163, Trp192, Asn207, Glu347, Glu372, Asn399, and Asp421. 207–210 (NPPY) provides a ligand contact to substrate. The segment at 301 to 518 (INLNRSYARR…MILQHALTDH (218 aa)) is tRNA (guanine-N(7)-)-methyltransferase. The interval 305 to 518 (RSYARRIGKS…MILQHALTDH (214 aa)) is tRNA MTase. Residue Asp421 is part of the active site. Substrate is bound by residues Lys425 and Asp457.

This sequence in the C-terminal section; belongs to the class I-like SAM-binding methyltransferase superfamily. TrmB family. The protein in the N-terminal section; belongs to the protein N5-glutamine methyltransferase family. PrmC subfamily.

The enzyme catalyses L-glutaminyl-[peptide chain release factor] + S-adenosyl-L-methionine = N(5)-methyl-L-glutaminyl-[peptide chain release factor] + S-adenosyl-L-homocysteine + H(+). It catalyses the reaction guanosine(46) in tRNA + S-adenosyl-L-methionine = N(7)-methylguanosine(46) in tRNA + S-adenosyl-L-homocysteine. Its function is as follows. Methylates the class 1 translation termination release factors RF1/PrfA and RF2/PrfB on the glutamine residue of the universally conserved GGQ motif. Catalyzes the formation of N(7)-methylguanine at position 46 (m7G46) in tRNA. The protein is Bifunctional methyltransferase (prmC/trmB) of Rickettsia prowazekii (strain Madrid E).